The primary structure comprises 632 residues: Extracellular metalloproteinase 2 (632 aa).

Residues 1–19 (MHGLLLAGLAAALPLGVAG) form the signal peptide. Residues 20 to 244 (LPARQQSGLS…VHNVVDYVAS (225 aa)) constitute a propeptide that is removed on maturation. N270 is a glycosylation site (N-linked (GlcNAc...) asparagine). H429 serves as a coordination point for Zn(2+). Residue E430 is part of the active site. H433 lines the Zn(2+) pocket.

It belongs to the peptidase M36 family. Zn(2+) serves as cofactor.

It is found in the secreted. Secreted metalloproteinase probably acting as a virulence factor. This chain is Extracellular metalloproteinase 2 (MEP2), found in Arthroderma benhamiae (Trichophyton mentagrophytes).